Consider the following 101-residue polypeptide: uncharacterized protein (101 aa).

It localises to the cytoplasm. This is an uncharacterized protein from Saccharomyces cerevisiae (strain ATCC 204508 / S288c) (Baker's yeast).